Here is a 106-residue protein sequence, read N- to C-terminus: Iron-sulfur cluster assembly protein CyaY (106 aa).

The protein belongs to the frataxin family.

In terms of biological role, involved in iron-sulfur (Fe-S) cluster assembly. May act as a regulator of Fe-S biogenesis. This Salmonella arizonae (strain ATCC BAA-731 / CDC346-86 / RSK2980) protein is Iron-sulfur cluster assembly protein CyaY.